Reading from the N-terminus, the 260-residue chain is Ribosome maturation factor RimP (260 aa).

2 stretches are compositionally biased toward basic and acidic residues: residues 189 to 199 (RRGRDAEREQL) and 215 to 227 (AREM…PRKE). Residues 189–260 (RRGRDAEREQ…QTTSDPHQGE (72 aa)) are disordered. Over residues 228-242 (KTAKKPLPKNTKAHR) the composition is skewed to basic residues.

Belongs to the RimP family.

It localises to the cytoplasm. In terms of biological role, required for maturation of 30S ribosomal subunits. This Afipia carboxidovorans (strain ATCC 49405 / DSM 1227 / KCTC 32145 / OM5) (Oligotropha carboxidovorans) protein is Ribosome maturation factor RimP.